Reading from the N-terminus, the 203-residue chain is Proteasome subunit beta 1 (203 aa).

Residues 1 to 7 (MAEKLKG) constitute a propeptide, removed in mature form; by autocatalysis. T8 acts as the Nucleophile in catalysis.

The protein belongs to the peptidase T1B family. As to quaternary structure, the 20S proteasome core is composed of 14 alpha and 14 beta subunits that assemble into four stacked heptameric rings, resulting in a barrel-shaped structure. The two inner rings, each composed of seven catalytic beta subunits, are sandwiched by two outer rings, each composed of seven alpha subunits. The catalytic chamber with the active sites is on the inside of the barrel. Has a gated structure, the ends of the cylinder being occluded by the N-termini of the alpha-subunits. Is capped at one or both ends by the proteasome regulatory ATPase, PAN.

It is found in the cytoplasm. It carries out the reaction Cleavage of peptide bonds with very broad specificity.. With respect to regulation, the formation of the proteasomal ATPase PAN-20S proteasome complex, via the docking of the C-termini of PAN into the intersubunit pockets in the alpha-rings, triggers opening of the gate for substrate entry. Interconversion between the open-gate and close-gate conformations leads to a dynamic regulation of the 20S proteasome proteolysis activity. Its function is as follows. Component of the proteasome core, a large protease complex with broad specificity involved in protein degradation. The protein is Proteasome subunit beta 1 of Thermococcus onnurineus (strain NA1).